The primary structure comprises 565 residues: Maturase K (565 aa).

The protein belongs to the intron maturase 2 family. MatK subfamily.

It localises to the plastid. The protein resides in the chloroplast. Usually encoded in the trnK tRNA gene intron. Probably assists in splicing its own and other chloroplast group II introns. The chain is Maturase K from Staurastrum punctulatum (Green alga).